The chain runs to 634 residues: Chaperone protein HtpG (634 aa).

The a; substrate-binding stretch occupies residues 1-342 (MTVDTDKQTL…SADLSLNVSR (342 aa)). A b region spans residues 343-559 (EILQSGPVVD…QGDLGLQMRQ (217 aa)). Residues 560-634 (LLEASGQAVP…LNKLLLELSA (75 aa)) form a c region.

The protein belongs to the heat shock protein 90 family. Homodimer.

Its subcellular location is the cytoplasm. Its function is as follows. Molecular chaperone. Has ATPase activity. This chain is Chaperone protein HtpG, found in Xanthomonas campestris pv. campestris (strain 8004).